The following is a 319-amino-acid chain: MFVYTLIFLFLAAANAYSNPGPCSGNCWTHDPGLYQRKSDGKYFLFATGGGIHISSADDLAGPWTDDGFVLPDGSSIDLDGQNNLWAPDLHYRDGTYYLYYSVSALGSQNSAIGVATSETLEAGSWTDHGSTGVTSTPNSPYNTIDGNWIAVGDKQYLNFGSYWQNLFQVELADGLKVKEGATPHQLSYNASGIHRQEAAFMFERNSYFYLTFSGGVALGYNATWPAQGEEYHINVCRSTSATGGFVDKNGVSCLNSGGSLLLASHGFVYGPGGQGILEDRNKELVLYYHYADTRIGKAVEDYQFGWNQLKWENDWPSV.

The N-terminal stretch at 1-16 (MFVYTLIFLFLAAANA) is a signal peptide. Asp31 acts as the Proton acceptor in catalysis. N-linked (GlcNAc...) asparagine glycosylation occurs at Asn190. Glu198 functions as the Proton donor in the catalytic mechanism. An N-linked (GlcNAc...) asparagine glycan is attached at Asn222.

Belongs to the glycosyl hydrolase 43 family.

The protein resides in the secreted. It carries out the reaction Endohydrolysis of (1-&gt;5)-alpha-arabinofuranosidic linkages in (1-&gt;5)-arabinans.. The protein operates within glycan metabolism; L-arabinan degradation. In terms of biological role, endo-1,5-alpha-L-arabinanase involved in degradation of pectin. Its preferred substrate is linear 1,5-alpha-L-arabinan. This chain is Probable arabinan endo-1,5-alpha-L-arabinosidase C (abnC), found in Aspergillus clavatus (strain ATCC 1007 / CBS 513.65 / DSM 816 / NCTC 3887 / NRRL 1 / QM 1276 / 107).